The sequence spans 327 residues: uncharacterized protein (327 aa).

The chain crosses the membrane as a helical span at residues 13 to 33 (IICIISIIVLLLIIISLYPHK).

The protein localises to the membrane. This is an uncharacterized protein from Caenorhabditis elegans.